The chain runs to 111 residues: Class I hydrophobin 2 (111 aa).

Positions Met-1–Ala-21 are cleaved as a signal peptide. Cystine bridges form between Cys-30–Cys-90, Cys-37–Cys-84, Cys-38–Cys-71, and Cys-91–Cys-104.

It belongs to the fungal hydrophobin family. In terms of assembly, self-assembles to form functional amyloid fibrils called rodlets. Self-assembly into fibrillar rodlets occurs spontaneously at hydrophobic:hydrophilic interfaces and the rodlets further associate laterally to form amphipathic monolayers. Behavior depends on environmental conditions: (1) when the pH increases or in the presence of Ca(2+) ions, an assembled state, beta-sheet rich, is formed; (2) when the solvent polarity increases, the vhm2 shows an increased tendency to reach hydrophobic/hydrophilic interfaces, with no detectable conformational change; and (3) at high temperature, a reversible conformational change and reversible aggregation occur. The physical and chemical properties, both in solution and as a biofilm, are affected by polysaccharides that act as hydrophilic stabilizer.

The protein localises to the secreted. It is found in the cell wall. Its function is as follows. Aerial growth, conidiation, and dispersal of filamentous fungi in the environment rely upon a capability of their secreting small amphipathic proteins called hydrophobins (HPBs) with low sequence identity. Class I can self-assemble into an outermost layer of rodlet bundles on aerial cell surfaces, conferring cellular hydrophobicity that supports fungal growth, development and dispersal; whereas Class II form highly ordered films at water-air interfaces through intermolecular interactions but contribute nothing to the rodlet structure. Vmh2 is a class I hydrophobin involved in biofilm formation and is essential for the maintenance of the surface hydrophobicity of the mycelium. Seems not to be involved in hyphal resistance against environmental stress. The polypeptide is Class I hydrophobin 2 (Pleurotus ostreatus (strain PC15) (Oyster mushroom)).